The chain runs to 229 residues: MGVRMWLPFPMLLLSALPATLLSGAAGFTPSLDSDFTFTLPAGQKECFYQPMPLKASLEIEYQVLDGGELDIDFHLASPEGRTLVFEQRKSDGVHTVETEDGDYMFCFDNTFSTISEKVIFFELILDNMGEEVEGQEDWKKYITNTDVLEMKLEDILESINSIKSRLSKSGHIQTLLRAFEARDRNIQESNFDRVNFWSVVNLMVMVVVSAIQVYTLKSLFEDKRKSRT.

Positions 1–27 are cleaved as a signal peptide; it reads MGVRMWLPFPMLLLSALPATLLSGAAG. Topologically, residues 28–196 are lumenal; sequence FTPSLDSDFT…IQESNFDRVN (169 aa). Residues 45 to 126 enclose the GOLD domain; that stretch reads KECFYQPMPL…EKVIFFELIL (82 aa). A helical membrane pass occupies residues 197 to 217; that stretch reads FWSVVNLMVMVVVSAIQVYTL. Over 218-229 the chain is Cytoplasmic; it reads KSLFEDKRKSRT.

This sequence belongs to the EMP24/GP25L family. In terms of assembly, interacts with TMED9 and TMED10.

The protein resides in the endoplasmic reticulum membrane. The protein localises to the golgi apparatus. It is found in the cis-Golgi network membrane. It localises to the endoplasmic reticulum-Golgi intermediate compartment membrane. Functionally, potential role in vesicular protein trafficking, mainly in the early secretory pathway. Required for the maintenance of the Golgi apparatus; involved in protein exchange between Golgi stacks during assembly. Probably not required for COPI-vesicle-mediated retrograde transport. This Rattus norvegicus (Rat) protein is Transmembrane emp24 domain-containing protein 5 (Tmed5).